The following is a 417-amino-acid chain: NADH-quinone oxidoreductase subunit D (417 aa).

The protein belongs to the complex I 49 kDa subunit family. NDH-1 is composed of 14 different subunits. Subunits NuoB, C, D, E, F, and G constitute the peripheral sector of the complex.

It localises to the cell inner membrane. It catalyses the reaction a quinone + NADH + 5 H(+)(in) = a quinol + NAD(+) + 4 H(+)(out). Its function is as follows. NDH-1 shuttles electrons from NADH, via FMN and iron-sulfur (Fe-S) centers, to quinones in the respiratory chain. The immediate electron acceptor for the enzyme in this species is believed to be ubiquinone. Couples the redox reaction to proton translocation (for every two electrons transferred, four hydrogen ions are translocated across the cytoplasmic membrane), and thus conserves the redox energy in a proton gradient. This is NADH-quinone oxidoreductase subunit D from Chromobacterium violaceum (strain ATCC 12472 / DSM 30191 / JCM 1249 / CCUG 213 / NBRC 12614 / NCIMB 9131 / NCTC 9757 / MK).